Reading from the N-terminus, the 321-residue chain is Fe-S cluster assembly protein DRE2 (321 aa).

Residues 1–131 (MERMLLLSPP…KPDFGPENIV (131 aa)) are N-terminal SAM-like domain. A linker region spans residues 132–213 (PLKLGKRKPV…EETLLDGEDM (82 aa)). Cys223, Cys234, Cys237, and Cys239 together coordinate [2Fe-2S] cluster. A fe-S binding site A region spans residues 223 to 239 (CRPKAGKRRRACKDCTC). The [4Fe-4S] cluster site is built by Cys284, Cys287, Cys295, and Cys298. 2 consecutive short sequence motifs (cx2C motif) follow at residues 284 to 287 (CGNC) and 295 to 298 (CDGC). A fe-S binding site B region spans residues 284 to 298 (CGNCALGDAFRCDGC).

This sequence belongs to the anamorsin family. In terms of assembly, monomer. Interacts with TAH18. Interacts with MIA40. It depends on [2Fe-2S] cluster as a cofactor. The cofactor is [4Fe-4S] cluster.

It is found in the cytoplasm. It localises to the mitochondrion intermembrane space. Functionally, component of the cytosolic iron-sulfur (Fe-S) protein assembly (CIA) machinery required for the maturation of extramitochondrial Fe-S proteins. Part of an electron transfer chain functioning in an early step of cytosolic Fe-S biogenesis, facilitating the de novo assembly of a [4Fe-4S] cluster on the scaffold complex CFD1-NBP35. Electrons are transferred to DRE2 from NADPH via the FAD- and FMN-containing protein TAH18. TAH18-DRE2 are also required for the assembly of the diferric tyrosyl radical cofactor of ribonucleotide reductase (RNR), probably by providing electrons for reduction during radical cofactor maturation in the catalytic small subunit RNR2. The polypeptide is Fe-S cluster assembly protein DRE2 (Coccidioides posadasii (strain C735) (Valley fever fungus)).